A 130-amino-acid polypeptide reads, in one-letter code: S-adenosylmethionine decarboxylase proenzyme (130 aa).

Serine 64 (schiff-base intermediate with substrate; via pyruvic acid) is an active-site residue. The residue at position 64 (serine 64) is a Pyruvic acid (Ser); by autocatalysis. The active-site Proton acceptor; for processing activity is histidine 69. Residue cysteine 84 is the Proton donor; for catalytic activity of the active site.

Belongs to the prokaryotic AdoMetDC family. Type 1 subfamily. Heterotetramer of two alpha and two beta chains arranged as a dimer of alpha/beta heterodimers. Pyruvate is required as a cofactor. Is synthesized initially as an inactive proenzyme. Formation of the active enzyme involves a self-maturation process in which the active site pyruvoyl group is generated from an internal serine residue via an autocatalytic post-translational modification. Two non-identical subunits are generated from the proenzyme in this reaction, and the pyruvate is formed at the N-terminus of the alpha chain, which is derived from the carboxyl end of the proenzyme. The post-translation cleavage follows an unusual pathway, termed non-hydrolytic serinolysis, in which the side chain hydroxyl group of the serine supplies its oxygen atom to form the C-terminus of the beta chain, while the remainder of the serine residue undergoes an oxidative deamination to produce ammonia and the pyruvoyl group blocking the N-terminus of the alpha chain.

The catalysed reaction is S-adenosyl-L-methionine + H(+) = S-adenosyl 3-(methylsulfanyl)propylamine + CO2. It participates in amine and polyamine biosynthesis; S-adenosylmethioninamine biosynthesis; S-adenosylmethioninamine from S-adenosyl-L-methionine: step 1/1. Its function is as follows. Catalyzes the decarboxylation of S-adenosylmethionine to S-adenosylmethioninamine (dcAdoMet), the propylamine donor required for the synthesis of the polyamines spermine and spermidine from the diamine putrescine. The chain is S-adenosylmethionine decarboxylase proenzyme from Picrophilus torridus (strain ATCC 700027 / DSM 9790 / JCM 10055 / NBRC 100828 / KAW 2/3).